A 148-amino-acid chain; its full sequence is UPF0178 protein DP1304 (148 aa).

The protein belongs to the UPF0178 family.

The sequence is that of UPF0178 protein DP1304 from Desulfotalea psychrophila (strain LSv54 / DSM 12343).